Reading from the N-terminus, the 181-residue chain is ATP-dependent protease subunit HslV (181 aa).

Residue T7 is part of the active site. 3 residues coordinate Na(+): A162, C165, and T168.

It belongs to the peptidase T1B family. HslV subfamily. A double ring-shaped homohexamer of HslV is capped on each side by a ring-shaped HslU homohexamer. The assembly of the HslU/HslV complex is dependent on binding of ATP.

The protein resides in the cytoplasm. The enzyme catalyses ATP-dependent cleavage of peptide bonds with broad specificity.. Allosterically activated by HslU binding. Its function is as follows. Protease subunit of a proteasome-like degradation complex believed to be a general protein degrading machinery. The polypeptide is ATP-dependent protease subunit HslV (Coxiella burnetii (strain RSA 493 / Nine Mile phase I)).